Consider the following 122-residue polypeptide: Large ribosomal subunit protein bL12 (122 aa).

This sequence belongs to the bacterial ribosomal protein bL12 family. Homodimer. Part of the ribosomal stalk of the 50S ribosomal subunit. Forms a multimeric L10(L12)X complex, where L10 forms an elongated spine to which 2 to 4 L12 dimers bind in a sequential fashion. Binds GTP-bound translation factors.

Forms part of the ribosomal stalk which helps the ribosome interact with GTP-bound translation factors. Is thus essential for accurate translation. The sequence is that of Large ribosomal subunit protein bL12 from Latilactobacillus sakei subsp. sakei (strain 23K) (Lactobacillus sakei subsp. sakei).